The chain runs to 257 residues: tRNA (guanine-N(1)-)-methyltransferase (257 aa).

Residues glycine 112 and 136–141 each bind S-adenosyl-L-methionine; that span reads LGDYVL.

The protein belongs to the RNA methyltransferase TrmD family. As to quaternary structure, homodimer.

Its subcellular location is the cytoplasm. The enzyme catalyses guanosine(37) in tRNA + S-adenosyl-L-methionine = N(1)-methylguanosine(37) in tRNA + S-adenosyl-L-homocysteine + H(+). Functionally, specifically methylates guanosine-37 in various tRNAs. This Salinispora tropica (strain ATCC BAA-916 / DSM 44818 / JCM 13857 / NBRC 105044 / CNB-440) protein is tRNA (guanine-N(1)-)-methyltransferase.